Here is a 264-residue protein sequence, read N- to C-terminus: 4-oxalocrotonate decarboxylase (264 aa).

This sequence belongs to the hydratase/decarboxylase family.

The catalysed reaction is (3E)-2-oxohex-3-enedioate + H(+) = 2-oxopent-4-enoate + CO2. Its pathway is aromatic compound metabolism; benzoate degradation via hydroxylation. The protein is 4-oxalocrotonate decarboxylase (dmpH) of Pseudomonas sp. (strain CF600).